A 134-amino-acid polypeptide reads, in one-letter code: Profilin-3 (134 aa).

The cysteines at positions 13 and 118 are disulfide-linked. An Involved in PIP2 interaction motif is present at residues Ala84–Thr100. Thr114 bears the Phosphothreonine mark.

The protein belongs to the profilin family. In terms of assembly, occurs in many kinds of cells as a complex with monomeric actin in a 1:1 ratio. Phosphorylated by MAP kinases.

The protein resides in the cytoplasm. It localises to the cytoskeleton. Its function is as follows. Binds to actin and affects the structure of the cytoskeleton. At high concentrations, profilin prevents the polymerization of actin, whereas it enhances it at low concentrations. In Olea europaea (Common olive), this protein is Profilin-3.